The chain runs to 591 residues: L-fucose isomerase (591 aa).

Active-site proton acceptor residues include Glu337 and Asp361. Residues Glu337, Asp361, and His528 each contribute to the Mn(2+) site.

The protein belongs to the L-fucose isomerase family. As to quaternary structure, homohexamer. It depends on Mn(2+) as a cofactor.

It is found in the cytoplasm. The enzyme catalyses L-fucose = L-fuculose. It participates in carbohydrate degradation; L-fucose degradation; L-lactaldehyde and glycerone phosphate from L-fucose: step 1/3. Functionally, converts the aldose L-fucose into the corresponding ketose L-fuculose. The sequence is that of L-fucose isomerase from Escherichia coli O17:K52:H18 (strain UMN026 / ExPEC).